The primary structure comprises 413 residues: NAD(P)H oxidoreductase RTN4IP1, mitochondrial (413 aa).

The N-terminal 23 residues, 1-23, are a transit peptide targeting the mitochondrion; sequence MTAAGFNSILCLRQLVRLNRRQY. The tract at residues 27–52 is disordered; the sequence is AKSVLSGSQTNDQATPPPTSKSADKM. Residues 31–40 are compositionally biased toward polar residues; it reads LSGSQTNDQA. One can recognise an Enoyl reductase (ER) domain in the interval 61–405; that stretch reads GDIDELQLSE…SGHLRGKIVV (345 aa). NADPH is bound by residues S228, G230, V231, S251, Y269, G353, F355, H398, and R400.

It belongs to the zinc-containing alcohol dehydrogenase family. Quinone oxidoreductase subfamily.

The protein resides in the mitochondrion matrix. The catalysed reaction is a quinone + NADH + H(+) = a quinol + NAD(+). It carries out the reaction a quinone + NADPH + H(+) = a quinol + NADP(+). Its pathway is cofactor biosynthesis; ubiquinone biosynthesis. Its function is as follows. NAD(P)H oxidoreductase. Involved in the ubiquinone biosynthetic pathway. The sequence is that of NAD(P)H oxidoreductase RTN4IP1, mitochondrial from Drosophila melanogaster (Fruit fly).